The chain runs to 912 residues: Metabotropic glutamate receptor 4 (912 aa).

Positions 1–32 (MSGKGGWAWWWARLPLCLLLSLYGSWVPSSLG) are cleaved as a signal peptide. Residues 33-586 (KPKGHPHMNS…PIVKLEWDSP (554 aa)) are Extracellular-facing. A disulfide bridge connects residues C67 and C109. N-linked (GlcNAc...) asparagine glycosylation is present at N98. L-glutamate-binding positions include S159, 180–182 (AST), and Y230. Intrachain disulfides connect C249–C538, C372–C388, C428–C435, C520–C539, C524–C542, C545–C557, and C560–C573. N-linked (GlcNAc...) asparagine glycosylation occurs at N301. Residue D312 participates in L-glutamate binding. K405 is an L-glutamate binding site. The chain crosses the membrane as a helical span at residues 587 to 607 (WAVLPLFLAVVGIAATLFVVV). The Cytoplasmic portion of the chain corresponds to 608-624 (TFVRYNDTPIVKASGRE). Residues 625–645 (LSYVLLAGIFLCYATTFLMIA) traverse the membrane as a helical segment. Over 646 to 653 (EPDLGTCS) the chain is Extracellular. The chain crosses the membrane as a helical span at residues 654–671 (LRRIFLGLGMSISYAALL). The Cytoplasmic portion of the chain corresponds to 672–699 (TKTNRIYRIFEQGKRSVSAPRFISPASQ). A helical transmembrane segment spans residues 700–720 (LAITFVLISLQLLCICVWFVV). The Extracellular segment spans residues 721–751 (DPSHSVVDFQDQRTLDPRFARGVLKCDISDL). The chain crosses the membrane as a helical span at residues 752–772 (SLICLLGYSMLLMVTCTVYAI). The Cytoplasmic portion of the chain corresponds to 773–786 (KTRGVPETFNEAKP). The chain crosses the membrane as a helical span at residues 787–807 (IGFTMYTTCIVWLAFIPIFFG). Residues 808–826 (TSQSADKLYIQTTTLTVSV) are Extracellular-facing. The helical transmembrane segment at 827–847 (SLSASVSLGMLYMPKVYIILF) threads the bilayer. Topologically, residues 848 to 912 (HPEQNVPKRK…TYVTYTNHAI (65 aa)) are cytoplasmic.

The protein belongs to the G-protein coupled receptor 3 family. Interacts with PICK1.

It localises to the cell membrane. Its function is as follows. G-protein coupled receptor for glutamate. Ligand binding causes a conformation change that triggers signaling via guanine nucleotide-binding proteins (G proteins) and modulates the activity of down-stream effectors. Signaling inhibits adenylate cyclase activity. This Mus musculus (Mouse) protein is Metabotropic glutamate receptor 4 (Grm4).